The primary structure comprises 909 residues: Myb-like protein Q (909 aa).

Disordered stretches follow at residues 15 to 65, 84 to 149, and 216 to 280; these read TTNN…QQQQ, QQQN…QQIL, and SAPS…KGPW. The segment covering 17-46 has biased composition (low complexity); it reads NNNSNNNNNNNNNNNNNNNNNNNNNINQNH. Positions 47 to 56 are enriched in basic residues; it reads QHQHQHHHHQ. Positions 84–126 are enriched in low complexity; it reads QQQNYGESTTSTSMIPPSITTSLTPLTPTLSSQPQNIQQQQQQ. The segment covering 127–139 has biased composition (basic residues); that stretch reads QHHHQQQHHHHHQ. Polar residues predominate over residues 216–226; it reads SAPSTPLSMSP. 2 consecutive HTH myb-type domains span residues 272–327 and 328–378; these read SPGI…SPEV and RKTN…LKKI. 2 consecutive DNA-binding regions (H-T-H motif) follow at residues 300–323 and 351–374; these read WSSIAAKIPGRIGKQCRERWFNHL and WTAISKMLDGRPANAIKNHWNSTL. Residues 379-389 are compositionally biased toward basic and acidic residues; the sequence is GGDSKSLNKEK. 5 disordered regions span residues 379-482, 497-531, 616-642, 672-748, and 826-855; these read GGDS…NTAI, QTTPNSSPSLSSKKTHDKQKVPQSPKNSKQQQTQQ, SMEQHHYQQQQQAQQQQHQQQQHQQQQ, YQQQ…HPIE, and LNTTTTTTNNNNNNNNNNNNNNNNNNIPTP. A compositionally biased stretch (acidic residues) spans 390 to 401; sequence DDDDDDDEDAED. Composition is skewed to low complexity over residues 415–431 and 444–482; these read SSSSTTTTTTTTTTNSS and STTTSTNNLNNSTNSTNSINNNNNNNNNNNNSSNTNTAI. Polar residues predominate over residues 497-508; it reads QTTPNSSPSLSS. Composition is skewed to low complexity over residues 622–642, 672–726, 733–744, and 826–851; these read YQQQQQAQQQQHQQQQHQQQQ, YQQQ…QQQQ, NSNNTDTTFSNS, and LNTTTTTTNNNNNNNNNNNNNNNNNN.

It localises to the nucleus. In Dictyostelium discoideum (Social amoeba), this protein is Myb-like protein Q (mybQ).